Reading from the N-terminus, the 427-residue chain is Heterogeneous nuclear ribonucleoprotein K (427 aa).

Positions 1-34 are disordered; the sequence is METEQQEETFTNTETNGKRPAEDMEEEQAFKRSR. The span at 16–34 shows a compositional bias: basic and acidic residues; the sequence is NGKRPAEDMEEEQAFKRSR. 2 consecutive KH domains span residues 39–101 and 117–182; these read MVEL…LKKI and DCEL…IKII. Tandem repeats lie at residues 51–73 and 56–59. Positions 51 to 385 are 2 X 22 AA approximate repeats; that stretch reads AGAVIGKGGK…QIRHESGASI (335 aa). The interval 56-371 is 5 X 4 AA repeats of G-X-G-G; sequence GKGGKNIKAL…LAGSIIGKGG (316 aa). An RNA-binding RGG-box region spans residues 209–246; that stretch reads YGGFTMMFDDRRGRPVGFPMRGRGGFDRMPPNRGGRPM. Tandem repeats lie at residues 218-223, 230-233, and 240-243. The tract at residues 218–302 is 2 X 6 AA approximate repeats; that stretch reads DRRGRPVGFP…LMSYDRRGRP (85 aa). The disordered stretch occupies residues 221-305; that stretch reads GRPVGFPMRG…YDRRGRPGDR (85 aa). Positions 249–258 are enriched in basic and acidic residues; the sequence is SRRDYDDMSP. 4 repeat units span residues 268–271, 297–302, 363–385, and 368–371. The segment covering 295–305 has biased composition (basic and acidic residues); that stretch reads SYDRRGRPGDR. Positions 351 to 415 constitute a KH 3 domain; that stretch reads IITTQVTIPK…DQIQNAQYLL (65 aa).

It localises to the cytoplasm. The protein localises to the nucleus. It is found in the nucleoplasm. One of the major pre-mRNA-binding proteins. Binds tenaciously to poly(C) sequences. Likely to play a role in the nuclear metabolism of hnRNAs, particularly for pre-mRNAs that contain cytidine-rich sequences. Can also bind poly(C) single-stranded DNA. May play an important role in p53/TP53 response to DNA damage, acting at the level of both transcription activation and repression. As part of a ribonucleoprotein complex, may negatively regulate the transcription of genes involved in neuronal differentiation. The chain is Heterogeneous nuclear ribonucleoprotein K (HNRNPK) from Gallus gallus (Chicken).